We begin with the raw amino-acid sequence, 126 residues long: Protein ApaG (126 aa).

The ApaG domain maps to 2–126 (TELETSIKID…FRLSIPGLLH (125 aa)).

The protein is Protein ApaG of Shewanella woodyi (strain ATCC 51908 / MS32).